Here is a 156-residue protein sequence, read N- to C-terminus: Small ribosomal subunit protein uS7 (156 aa).

The protein belongs to the universal ribosomal protein uS7 family. As to quaternary structure, part of the 30S ribosomal subunit. Contacts proteins S9 and S11.

One of the primary rRNA binding proteins, it binds directly to 16S rRNA where it nucleates assembly of the head domain of the 30S subunit. Is located at the subunit interface close to the decoding center, probably blocks exit of the E-site tRNA. This is Small ribosomal subunit protein uS7 from Desulforudis audaxviator (strain MP104C).